Here is a 99-residue protein sequence, read N- to C-terminus: MARITVEDCLEVVNNRFELVMMASKRARQLANGVPPLIENTNSEDKPTVLALREIAARKIDSKMIDEIEKAERERTEREAMEWAAAEVVADEDMSKSDD.

This sequence belongs to the RNA polymerase subunit omega family. In terms of assembly, the RNAP catalytic core consists of 2 alpha, 1 beta, 1 beta' and 1 omega subunit. When a sigma factor is associated with the core the holoenzyme is formed, which can initiate transcription.

It carries out the reaction RNA(n) + a ribonucleoside 5'-triphosphate = RNA(n+1) + diphosphate. Functionally, promotes RNA polymerase assembly. Latches the N- and C-terminal regions of the beta' subunit thereby facilitating its interaction with the beta and alpha subunits. This chain is DNA-directed RNA polymerase subunit omega (rpoZ), found in Xylella fastidiosa (strain 9a5c).